Here is a 309-residue protein sequence, read N- to C-terminus: tRNA pseudouridine synthase B (309 aa).

Residue Asp51 is the Nucleophile of the active site.

It belongs to the pseudouridine synthase TruB family. Type 1 subfamily.

The catalysed reaction is uridine(55) in tRNA = pseudouridine(55) in tRNA. Functionally, responsible for synthesis of pseudouridine from uracil-55 in the psi GC loop of transfer RNAs. This Coxiella burnetii (strain RSA 493 / Nine Mile phase I) protein is tRNA pseudouridine synthase B.